A 356-amino-acid polypeptide reads, in one-letter code: DNA polymerase IV (356 aa).

The 188-residue stretch at 1 to 188 folds into the UmuC domain; the sequence is MDTSRKIIHI…IPVTKFYGVG (188 aa). The Mg(2+) site is built by D11 and D106. E107 is an active-site residue.

This sequence belongs to the DNA polymerase type-Y family. Monomer. The cofactor is Mg(2+).

The protein localises to the cytoplasm. The enzyme catalyses DNA(n) + a 2'-deoxyribonucleoside 5'-triphosphate = DNA(n+1) + diphosphate. Functionally, poorly processive, error-prone DNA polymerase involved in untargeted mutagenesis. Copies undamaged DNA at stalled replication forks, which arise in vivo from mismatched or misaligned primer ends. These misaligned primers can be extended by PolIV. Exhibits no 3'-5' exonuclease (proofreading) activity. May be involved in translesional synthesis, in conjunction with the beta clamp from PolIII. The chain is DNA polymerase IV from Listeria innocua serovar 6a (strain ATCC BAA-680 / CLIP 11262).